Reading from the N-terminus, the 509-residue chain is Cytochrome P450 4X1 (509 aa).

A helical transmembrane segment spans residues 14 to 34; sequence FYLAFVFCLALGLLQAIKLYL. Cysteine 454 serves as a coordination point for heme.

It belongs to the cytochrome P450 family. The cofactor is heme. Expressed in brain, heart, kidney and skin and, at lower levels, in skeletal muscle and liver. In the brain, high levels are detected in amygdala and lower levels in globus pallidus and cerebellum. In the heart, very high levels in aorta, but very low levels in other heart regions. Also expressed in breast, prostate and colon.

The protein resides in the endoplasmic reticulum membrane. The protein localises to the microsome membrane. It carries out the reaction N-(5Z,8Z,11Z,14Z-eicosatetraenoyl)-ethanolamine + reduced [NADPH--hemoprotein reductase] + O2 = N-(14,15-epoxy-5Z,8Z,11Z-eicosatrienoyl)-ethanolamine + oxidized [NADPH--hemoprotein reductase] + H2O + H(+). Its function is as follows. A cytochrome P450 monooxygenase that selectively catalyzes the epoxidation of the last double bond of the arachidonoyl moiety of anandamide, potentially modulating endocannabinoid signaling. Has no hydroxylase activity toward various fatty acids, steroids and prostaglandins. Mechanistically, uses molecular oxygen inserting one oxygen atom into a substrate, and reducing the second into a water molecule, with two electrons provided by NADPH via cytochrome P450 reductase (CPR; NADPH-ferrihemoprotein reductase). In Homo sapiens (Human), this protein is Cytochrome P450 4X1.